Reading from the N-terminus, the 720-residue chain is DNA helicase II (720 aa).

A UvrD-like helicase ATP-binding domain is found at 8-286 (DSLNDKQREA…IRLEQNYRST (279 aa)). ATP contacts are provided by residues 32 to 37 (GSGKTR) and arginine 284. Residues 287–564 (SNILSAANAL…QLMTLHSAKG (278 aa)) form the UvrD-like helicase C-terminal domain.

It belongs to the helicase family. UvrD subfamily.

It catalyses the reaction Couples ATP hydrolysis with the unwinding of duplex DNA by translocating in the 3'-5' direction.. The catalysed reaction is ATP + H2O = ADP + phosphate + H(+). Functionally, a helicase with DNA-dependent ATPase activity. Unwinds DNA duplexes with 3'-5' polarity. Translocates on single-stranded DNA with 3'-5' polarity. Initiates unwinding more efficiently from a nicked substrate than double-stranded DNA. Involved in the post-incision events of nucleotide excision repair and methyl-directed mismatch repair, and probably also in repair of alkylated DNA. The protein is DNA helicase II of Escherichia coli (strain K12).